A 218-amino-acid chain; its full sequence is Structural protein V19 (218 aa).

It is found in the virion. This is Structural protein V19 from Sputnik virophage.